Consider the following 89-residue polypeptide: Large ribosomal subunit protein bL31B (89 aa).

This sequence belongs to the bacterial ribosomal protein bL31 family. Type B subfamily. Part of the 50S ribosomal subunit.

The protein is Large ribosomal subunit protein bL31B of Pseudomonas fluorescens (strain ATCC BAA-477 / NRRL B-23932 / Pf-5).